The following is a 44-amino-acid chain: Conotoxin Sr5.5 (44 aa).

An N-terminal signal peptide occupies residues 1-19 (MRCLPVFVILLLLIASAPS). Residues 20–29 (VDDNAKGTQH) constitute a propeptide that is removed on maturation.

Belongs to the conotoxin T superfamily. Post-translationally, contains 2 disulfide bonds that can be either 'C1-C3, C2-C4' or 'C1-C4, C2-C3', since these disulfide connectivities have been observed for conotoxins with cysteine framework V (for examples, see AC P0DQQ7 and AC P81755). Expressed by the venom duct.

It is found in the secreted. This is Conotoxin Sr5.5 from Conus spurius (Alphabet cone).